Reading from the N-terminus, the 56-residue chain is uncharacterized protein (56 aa).

The chain crosses the membrane as a helical span at residues Gly-12–Gly-32. The segment at Phe-19 to Val-31 is hydrophobic.

It is found in the membrane. This is an uncharacterized protein from Chenopodium amaranticolor (Quinoa).